The primary structure comprises 1037 residues: Probable inorganic carbon transporter subunit DabA 2 (1037 aa).

Zn(2+) contacts are provided by Cys460, Asp462, His719, and Cys734.

It belongs to the inorganic carbon transporter (TC 9.A.2) DabA family. In terms of assembly, forms a complex with DabB. Zn(2+) is required as a cofactor.

It localises to the cell inner membrane. In terms of biological role, part of an energy-coupled inorganic carbon pump. The sequence is that of Probable inorganic carbon transporter subunit DabA 2 from Nitrobacter winogradskyi (strain ATCC 25391 / DSM 10237 / CIP 104748 / NCIMB 11846 / Nb-255).